The sequence spans 617 residues: MANSTGLQFTVKVGALPDTTFAVVDFELSEALNQPFALSLNLASSQPGIDFGAVLDQPCELLVWYEGELQRRVSGIVSRFAQGDTGFRRTRYQAEVRPALWRLGLRTNARIFQTQKPDAIISTLLEEAGITDYAFALRHDHAVREYCVQYRESDLAFINRLAAEEGLFYFHEFEAGKHRVVFADDAGALAKGPELFFNLATQGLSEGAYVRRFRYAEAVSTAEVALKDYSFKTPAYGLLHNKMSSELAHQRESYQHFDYPGRFKQDPSGKAFTGYRLDALRAGAMTGNGESNAAELRPGSSFTLTEHPNPAFNLAWQVVAVAHSGQQPQALEEESGGEPTTLSNSFEVVKATTTWRAALPYKPMVDGPQIATVVGPAGEEIYCDEFGRVKLQFPWDRYGASDDQSSCWVRVSQGWAGGQYGLIAIPRIGHEVVVSFLEGDPDQPIVTGRTFHATNPSPYPLPASKTRTSLRTSTHKGAGFNELRFEDQAGQEEVFIHAQKDMNTVVLNNRSTSVNASHTENVGGDQTVVVQHNQTVSVKENQVTEIQGEQTVAVTKNRHTTVDDNESLQVKKNIAIQSQSGDVLIATAGGFIAIDKDGNISITGKGLVLNGTRIDLN.

The interval 449–469 is disordered; sequence RTFHATNPSPYPLPASKTRTS.

This sequence belongs to the VgrG protein family.

Functionally, a Vgr protein that is probably part of a type VI secretion system (T6SS). May be required for export of proteins involved in Rhs-mediated cellular contact-dependent growth inhibition (CDI). The protein is Putative type VI secretion system protein VgrGB (vgrGB) of Dickeya dadantii (strain 3937) (Erwinia chrysanthemi (strain 3937)).